The primary structure comprises 581 residues: Proline--tRNA ligase 1 (581 aa).

This sequence belongs to the class-II aminoacyl-tRNA synthetase family. ProS type 1 subfamily. In terms of assembly, homodimer.

Its subcellular location is the cytoplasm. It catalyses the reaction tRNA(Pro) + L-proline + ATP = L-prolyl-tRNA(Pro) + AMP + diphosphate. Its function is as follows. Catalyzes the attachment of proline to tRNA(Pro) in a two-step reaction: proline is first activated by ATP to form Pro-AMP and then transferred to the acceptor end of tRNA(Pro). As ProRS can inadvertently accommodate and process non-cognate amino acids such as alanine and cysteine, to avoid such errors it has two additional distinct editing activities against alanine. One activity is designated as 'pretransfer' editing and involves the tRNA(Pro)-independent hydrolysis of activated Ala-AMP. The other activity is designated 'posttransfer' editing and involves deacylation of mischarged Ala-tRNA(Pro). The misacylated Cys-tRNA(Pro) is not edited by ProRS. The chain is Proline--tRNA ligase 1 from Rhodococcus jostii (strain RHA1).